The following is a 307-amino-acid chain: Ribosomal RNA small subunit methyltransferase H (307 aa).

Residues 33–35 (GGY), D51, F82, D96, and Q103 each bind S-adenosyl-L-methionine.

The protein belongs to the methyltransferase superfamily. RsmH family.

It localises to the cytoplasm. It catalyses the reaction cytidine(1402) in 16S rRNA + S-adenosyl-L-methionine = N(4)-methylcytidine(1402) in 16S rRNA + S-adenosyl-L-homocysteine + H(+). Specifically methylates the N4 position of cytidine in position 1402 (C1402) of 16S rRNA. In Rickettsia rickettsii (strain Iowa), this protein is Ribosomal RNA small subunit methyltransferase H.